The primary structure comprises 601 residues: Ribosomal oxygenase 1 (601 aa).

A compositionally biased stretch (basic and acidic residues) spans 1-11; sequence MAACGAEERQR. The disordered stretch occupies residues 1-149; that stretch reads MAACGAEERQ…PGGGGVPGLL (149 aa). Positions 61–70 are enriched in low complexity; it reads ERAAPPQGAA. The segment covering 73–87 has biased composition (basic and acidic residues); the sequence is DRVERAGSSEAKQGD. The JmjC domain occupies 254 to 399; that stretch reads CSLRLLSPQA…DFLEKLLPAA (146 aa). Fe cation-binding residues include H300, D302, and H365.

Belongs to the ROX family. NO66 subfamily. Fe(2+) is required as a cofactor.

It is found in the nucleus. The protein resides in the nucleolus. It localises to the nucleoplasm. The catalysed reaction is N(6),N(6)-dimethyl-L-lysyl(36)-[histone H3] + 2 2-oxoglutarate + 2 O2 = L-lysyl(36)-[histone H3] + 2 formaldehyde + 2 succinate + 2 CO2. It catalyses the reaction N(6)-methyl-L-lysyl-[protein] + 2-oxoglutarate + O2 = L-lysyl-[protein] + formaldehyde + succinate + CO2. It carries out the reaction L-histidyl-[protein] + 2-oxoglutarate + O2 = (3S)-3-hydroxy-L-histidyl-[protein] + succinate + CO2. Its function is as follows. Oxygenase that can act as both a histone lysine demethylase and a ribosomal histidine hydroxylase. Specifically demethylates 'Lys-4' (H3K4me) and 'Lys-36' (H3K36me) of histone H3, thereby playing a central role in histone code. Preferentially demethylates trimethylated H3 'Lys-4' (H3K4me3) and monomethylated H3 'Lys-4' (H3K4me1) residues, while it has weaker activity for dimethylated H3 'Lys-36' (H3K36me2). Also catalyzes demethylation of non-histone proteins. Also catalyzes the hydroxylation of 60S ribosomal protein L8 on 'His-216', thereby playing a role in ribosome biogenesis. The protein is Ribosomal oxygenase 1 (RIOX1) of Gallus gallus (Chicken).